The primary structure comprises 343 residues: Transmembrane protein 120A (343 aa).

The Cytoplasmic portion of the chain corresponds to 1-132; the sequence is MQSPPPDPLG…KQAKFAYKDE (132 aa). Position 130 (Lys130) interacts with CoA. The helical transmembrane segment at 133–152 threads the bilayer; that stretch reads YEKFKLYLTIILIVISFTCR. Topologically, residues 153 to 158 are extracellular; that stretch reads FLLNSR. A helical transmembrane segment spans residues 159 to 177; that stretch reads VTDAAFNFLLVWYYCTLTI. Residues 178–190 lie on the Cytoplasmic side of the membrane; the sequence is RESILINNGSRIK. Residues Ser187 and Arg188 each contribute to the CoA site. The chain crosses the membrane as a helical span at residues 191 to 209; sequence GWWVFHHYVSTFLSGVMLT. Over 210–218 the chain is Extracellular; it reads WPDGLMYQK. Residues 219–240 traverse the membrane as a helical segment; the sequence is FRNQFLSFSMYQSFVQFLQYYY. CoA is bound by residues Gln237, Tyr240, Gln241, and His283. Over 241–270 the chain is Cytoplasmic; it reads QSGCLYRLRALGERHTMDLTVEGFQSWMWR. The chain crosses the membrane as a helical span at residues 271 to 294; sequence GLTFLLPFLFFGHFWQLFNALTLF. Residues 295 to 304 lie on the Extracellular side of the membrane; it reads NLARDPECKE. Residues 305–330 traverse the membrane as a helical segment; sequence WQVLMCGLPFLLLFLGNFFTTLRVVH. At 331–343 the chain is on the cytoplasmic side; that stretch reads QKFHSQQHGSKKD. Lys332 is a binding site for CoA.

Belongs to the TMEM120 family. As to quaternary structure, homodimer. Forms heterooligomer with TMEM120B. Interacts with PKD2; TMEM120A inhibits PKD2 channel activity through the physical association of PKD2 with TMEM120A.

Its subcellular location is the cell membrane. The protein resides in the nucleus inner membrane. The protein localises to the endoplasmic reticulum. Its function is as follows. Multifunctional protein involved in mechanosensation, and plays an essential role in lipid metabolism and adipocyte differentiation. May function as a potential ion channel involved in sensing mechanical stimuli. Mediates the mechanosensitivity of the PKD2-TMEM120A channel complex through direct physical interaction. TMEM120A seems to affect mechanosensation by inhibiting PIEZO2 channels, possibly by altering cellular lipid content. TMEM120A is structurally similar to a lipid-modifying enzyme, ELOVL7, and contains a bound coenzyme A molecule, which suggests it might function as an enzyme in lipid metabolism. Additionnaly, implicated in innate immune response against Zika virus. Acts as a key activator of the antiviral signaling involving STING1. This chain is Transmembrane protein 120A, found in Rattus norvegicus (Rat).